The following is a 298-amino-acid chain: Ethanolamine ammonia-lyase small subunit (298 aa).

A disordered region spans residues 17–37; that stretch reads MGQDVPQPVAPSKQEGAKPQC. Residues V210, E231, and C261 each contribute to the adenosylcob(III)alamin site.

This sequence belongs to the EutC family. The basic unit is a heterodimer which dimerizes to form tetramers. The heterotetramers trimerize; 6 large subunits form a core ring with 6 small subunits projecting outwards. Adenosylcob(III)alamin serves as cofactor.

The protein resides in the bacterial microcompartment. It catalyses the reaction ethanolamine = acetaldehyde + NH4(+). The protein operates within amine and polyamine degradation; ethanolamine degradation. Catalyzes the deamination of various vicinal amino-alcohols to oxo compounds. Allows this organism to utilize ethanolamine as the sole source of nitrogen and carbon in the presence of external vitamin B12. The polypeptide is Ethanolamine ammonia-lyase small subunit (Salmonella paratyphi A (strain ATCC 9150 / SARB42)).